The following is a 226-amino-acid chain: ATP synthase subunit a (226 aa).

The next 5 helical transmembrane spans lie at 17 to 37 (FNYLFHLILVAIIVLIVAKLA), 79 to 99 (LVATIGLIVLTSNVIGIIPGF), 105 to 125 (SLNLTLCLALSVFLYYNFEGI), 168 to 188 (FGNIKGDDLFLMVVLSLAPWV), and 200 to 222 (MALLQTFIFMILTYVYLAGAVVV).

It belongs to the ATPase A chain family. F-type ATPases have 2 components, CF(1) - the catalytic core - and CF(0) - the membrane proton channel. CF(1) has five subunits: alpha(3), beta(3), gamma(1), delta(1), epsilon(1). CF(0) has three main subunits: a(1), b(2) and c(9-12). The alpha and beta chains form an alternating ring which encloses part of the gamma chain. CF(1) is attached to CF(0) by a central stalk formed by the gamma and epsilon chains, while a peripheral stalk is formed by the delta and b chains.

The protein resides in the cell inner membrane. Its function is as follows. Key component of the proton channel; it plays a direct role in the translocation of protons across the membrane. The sequence is that of ATP synthase subunit a from Campylobacter fetus subsp. fetus (strain 82-40).